We begin with the raw amino-acid sequence, 298 residues long: Tyrosine recombinase XerC (298 aa).

The 87-residue stretch at 2–88 (TDLHTDVERY…ALRSFFDWLV (87 aa)) folds into the Core-binding (CB) domain. The Tyr recombinase domain maps to 109–288 (HLPKNIDVDD…DFQHLASVYD (180 aa)). Active-site residues include Arg-148, Lys-172, His-240, Arg-243, and His-266. Tyr-275 (O-(3'-phospho-DNA)-tyrosine intermediate) is an active-site residue.

Belongs to the 'phage' integrase family. XerC subfamily. Forms a cyclic heterotetrameric complex composed of two molecules of XerC and two molecules of XerD, in which XerC interacts with XerD via its C-terminal region, XerD interacts with XerC via its C-terminal region and so on.

Its subcellular location is the cytoplasm. With respect to regulation, ftsK may regulate the catalytic switch between XerC and XerD in the heterotetrameric complex during the two steps of the recombination process. In terms of biological role, site-specific tyrosine recombinase, which acts by catalyzing the cutting and rejoining of the recombining DNA molecules. Binds cooperatively to specific DNA consensus sequences that are separated from XerD binding sites by a short central region, forming the heterotetrameric XerC-XerD complex that recombines DNA substrates. The complex is essential to convert dimers of the bacterial chromosome into monomers to permit their segregation at cell division. It also contributes to the segregational stability of plasmids. In the complex XerC specifically exchanges the top DNA strands. The sequence is that of Tyrosine recombinase XerC from Escherichia coli (strain 55989 / EAEC).